The sequence spans 232 residues: Flagellar L-ring protein (232 aa).

A signal peptide spans 1–21; the sequence is MQKNAAHTYAISSLLVLSLTG. Cysteine 22 carries the N-palmitoyl cysteine lipid modification. Cysteine 22 carries the S-diacylglycerol cysteine lipid modification.

It belongs to the FlgH family. As to quaternary structure, the basal body constitutes a major portion of the flagellar organelle and consists of four rings (L,P,S, and M) mounted on a central rod.

The protein resides in the cell outer membrane. It is found in the bacterial flagellum basal body. Assembles around the rod to form the L-ring and probably protects the motor/basal body from shearing forces during rotation. The protein is Flagellar L-ring protein of Escherichia coli O7:K1 (strain IAI39 / ExPEC).